The chain runs to 104 residues: Ig lambda-1 chain C region (104 aa).

The region spanning 6-99 is the Ig-like domain; the sequence is PSVTLFPPSS…EENTVEKSLS (94 aa). Cys-27 and Cys-85 are joined by a disulfide.

The polypeptide is Ig lambda-1 chain C region (Rattus norvegicus (Rat)).